The chain runs to 863 residues: Neuroligin-1 (863 aa).

The N-terminal stretch at 1-45 (MALPRCTWPNYVWRAVMACLVHRGLGAPLTLCMLGCLLQAGHVLS) is a signal peptide. At 46-717 (QKLDDVDPLV…DQRDYSTELS (672 aa)) the chain is on the extracellular side. Asparagine 109 carries an N-linked (GlcNAc...) (complex) asparagine glycan. Cysteines 117 and 153 form a disulfide. Residues 183 to 212 (KGGPLTKKQTDDLGDNDGAEDEDIRDSGGP) are disordered. The segment covering 194–206 (DLGDNDGAEDEDI) has biased composition (acidic residues). Residues asparagine 323 and asparagine 363 are each glycosylated (N-linked (GlcNAc...) (complex) asparagine). 2 disulfides stabilise this stretch: cysteine 362-cysteine 373 and cysteine 532-cysteine 566. An N-linked (GlcNAc...) asparagine glycan is attached at asparagine 567. Positions 670 to 708 (PSTDITFRPTRKNSVPVTSAFPTAKQDDPKQQPSPFSVD) are disordered. A compositionally biased stretch (polar residues) spans 681 to 690 (KNSVPVTSAF). 2 O-linked (GalNAc...) serine glycosylation sites follow: serine 703 and serine 706. A helical transmembrane segment spans residues 718–738 (VTIAVGASLLFLNILAFAALY). Over 739-863 (YKKDKRRHDV…HPHSHSTTRV (125 aa)) the chain is Cytoplasmic. The tract at residues 842–863 (GGQNNTLPHPHPHPHSHSTTRV) is disordered. The segment covering 851–863 (PHPHPHSHSTTRV) has biased composition (basic residues).

It belongs to the type-B carboxylesterase/lipase family. As to quaternary structure, interacts with neurexins NRXN1, NRXN2 and NRXN3. Interaction with neurexins is mediated by heparan sulfate glycan modification on neurexin. Interacts with NLGN3. Interacts with AIP1 and PDZRN3. Interacts (via its C-terminus) with DLG4/PSD-95 (via PDZ domain 3). Interacts with GOPC. As to expression, expressed in the blood vessel walls (at protein level). Highly expressed in brain through prenatal stages, and at lower levels in pancreas islet beta cells.

The protein resides in the cell membrane. The protein localises to the postsynaptic density. It is found in the synaptic cleft. It localises to the synaptic cell membrane. In terms of biological role, cell surface protein involved in cell-cell-interactions via its interactions with neurexin family members. Plays a role in synapse function and synaptic signal transmission, and probably mediates its effects by recruiting and clustering other synaptic proteins. May promote the initial formation of synapses, but is not essential for this. In vitro, triggers the de novo formation of presynaptic structures. May be involved in specification of excitatory synapses. Required to maintain wakefulness quality and normal synchrony of cerebral cortex activity during wakefulness and sleep. The protein is involved in nervous system development. The polypeptide is Neuroligin-1 (NLGN1) (Homo sapiens (Human)).